The primary structure comprises 463 residues: Putative glycine--tRNA ligase, cytoplasmic (463 aa).

The disordered stretch occupies residues 25 to 54 (TLEDSHAAKPETNAAIELPNKSKPEKSAVE). The span at 44–54 (NKSKPEKSAVE) shows a compositional bias: basic and acidic residues. Residues arginine 153 and glutamate 239 each coordinate substrate. ATP contacts are provided by residues 271 to 273 (RNE) and 281 to 286 (LRTREF). Residues 286–290 (FTLAE) and asparagine 376 each bind substrate. 398–399 (EC) is a binding site for ATP.

Belongs to the class-II aminoacyl-tRNA synthetase family. In terms of assembly, homodimer.

It localises to the cytoplasm. It carries out the reaction tRNA(Gly) + glycine + ATP = glycyl-tRNA(Gly) + AMP + diphosphate. Catalyzes the attachment of glycine to tRNA(Gly). Is also able produce diadenosine tetraphosphate (Ap4A), a universal pleiotropic signaling molecule needed for cell regulation pathways, by direct condensation of 2 ATPs. In Arabidopsis thaliana (Mouse-ear cress), this protein is Putative glycine--tRNA ligase, cytoplasmic.